Consider the following 208-residue polypeptide: Ubiquitin-conjugating enzyme E2 S (208 aa).

The 147-residue stretch at Q14–Q160 folds into the UBC core domain. C98 serves as the catalytic Glycyl thioester intermediate. The segment at A159 to L208 is disordered. Basic and acidic residues predominate over residues D170–L198. The span at K199 to L208 shows a compositional bias: basic residues.

It belongs to the ubiquitin-conjugating enzyme family.

It carries out the reaction S-ubiquitinyl-[E1 ubiquitin-activating enzyme]-L-cysteine + [E2 ubiquitin-conjugating enzyme]-L-cysteine = [E1 ubiquitin-activating enzyme]-L-cysteine + S-ubiquitinyl-[E2 ubiquitin-conjugating enzyme]-L-cysteine.. It functions in the pathway protein modification; protein ubiquitination. In terms of biological role, catalyzes the covalent attachment of ubiquitin to other proteins. Acts as an essential factor of the anaphase promoting complex/cyclosome (APC/C), a cell cycle-regulated ubiquitin ligase that controls progression through mitosis. Acts by specifically elongating polyubiquitin chains initiated by the E2 enzyme vih/UbcH10 on APC/C substrates, enhancing the degradation of APC/C substrates by the proteasome and promoting mitotic exit. The sequence is that of Ubiquitin-conjugating enzyme E2 S from Drosophila willistoni (Fruit fly).